Reading from the N-terminus, the 402-residue chain is 4-hydroxy-3-methylbut-2-en-1-yl diphosphate synthase (ferredoxin) (402 aa).

[4Fe-4S] cluster contacts are provided by Cys-311, Cys-314, Cys-345, and Glu-352.

Belongs to the IspG family. The cofactor is [4Fe-4S] cluster.

The catalysed reaction is (2E)-4-hydroxy-3-methylbut-2-enyl diphosphate + 2 oxidized [2Fe-2S]-[ferredoxin] + H2O = 2-C-methyl-D-erythritol 2,4-cyclic diphosphate + 2 reduced [2Fe-2S]-[ferredoxin] + H(+). Its pathway is isoprenoid biosynthesis; isopentenyl diphosphate biosynthesis via DXP pathway; isopentenyl diphosphate from 1-deoxy-D-xylulose 5-phosphate: step 5/6. Functionally, converts 2C-methyl-D-erythritol 2,4-cyclodiphosphate (ME-2,4cPP) into 1-hydroxy-2-methyl-2-(E)-butenyl 4-diphosphate, using ferredoxin I (PetF) as the reducing agent. The chain is 4-hydroxy-3-methylbut-2-en-1-yl diphosphate synthase (ferredoxin) from Thermosynechococcus vestitus (strain NIES-2133 / IAM M-273 / BP-1).